The chain runs to 126 residues: uncharacterized protein (126 aa).

This is an uncharacterized protein from Acanthamoeba polyphaga mimivirus (APMV).